An 878-amino-acid chain; its full sequence is Aconitate hydratase A (878 aa).

C426, C492, and C495 together coordinate [4Fe-4S] cluster.

It belongs to the aconitase/IPM isomerase family. Monomer. It depends on [4Fe-4S] cluster as a cofactor.

It carries out the reaction citrate = D-threo-isocitrate. It catalyses the reaction (2S,3R)-3-hydroxybutane-1,2,3-tricarboxylate = 2-methyl-cis-aconitate + H2O. Its pathway is carbohydrate metabolism; tricarboxylic acid cycle; isocitrate from oxaloacetate: step 2/2. It functions in the pathway organic acid metabolism; propanoate degradation. Its function is as follows. Involved in the catabolism of short chain fatty acids (SCFA) via the tricarboxylic acid (TCA)(acetyl degradation route) and probably the 2-methylcitrate cycle I (propionate degradation route). Catalyzes the reversible isomerization of citrate to isocitrate via cis-aconitate. Could catalyze the hydration of 2-methyl-cis-aconitate to yield (2R,3S)-2-methylisocitrate. The apo form of AcnA functions as a RNA-binding regulatory protein. In Rickettsia typhi (strain ATCC VR-144 / Wilmington), this protein is Aconitate hydratase A (acnA).